The sequence spans 233 residues: Probable translation initiation factor, mitochondrial (233 aa).

A mitochondrion-targeting transit peptide spans 1-39 (MNSYLQFPHRKLFIQFSYSLTSVFRKCQSRTFMNSQFAS).

It belongs to the IF-3 family.

It localises to the mitochondrion. Functionally, may be involved in mitochondrial translation initiation. The sequence is that of Probable translation initiation factor, mitochondrial from Schizosaccharomyces pombe (strain 972 / ATCC 24843) (Fission yeast).